The primary structure comprises 180 residues: 3-deoxy-D-manno-octulosonate 8-phosphate phosphatase KdsC (180 aa).

Mg(2+) contacts are provided by aspartate 14 and aspartate 16. Substrate is bound by residues aspartate 16, 37–41 (HVRDG), lysine 45, arginine 60, arginine 68, and lysine 84. Mg(2+) is bound at residue aspartate 107.

This sequence belongs to the KdsC family. Homotetramer. Mg(2+) serves as cofactor.

The catalysed reaction is 3-deoxy-alpha-D-manno-2-octulosonate-8-phosphate + H2O = 3-deoxy-alpha-D-manno-oct-2-ulosonate + phosphate. In terms of biological role, catalyzes the hydrolysis of 3-deoxy-D-manno-octulosonate 8-phosphate (KDO 8-P) to 3-deoxy-D-manno-octulosonate (KDO) and inorganic phosphate. The protein is 3-deoxy-D-manno-octulosonate 8-phosphate phosphatase KdsC of Haemophilus influenzae (strain ATCC 51907 / DSM 11121 / KW20 / Rd).